Consider the following 469-residue polypeptide: Cyclin-dependent kinase 14 (469 aa).

A phosphoserine mark is found at Ser-24, Ser-78, and Ser-95. A disordered region spans residues Phe-103 to Asp-133. The residue at position 134 (Ser-134) is a Phosphoserine. Residues Tyr-135 to Phe-419 enclose the Protein kinase domain. Residues Leu-141 to Val-149 and Lys-164 contribute to the ATP site. Asp-256 serves as the catalytic Proton acceptor. Residues Glu-449–His-469 are disordered. Positions Lys-456 to His-469 are enriched in polar residues.

The protein belongs to the protein kinase superfamily. CMGC Ser/Thr protein kinase family. CDC2/CDKX subfamily. Found in a complex with LRP6, CCNY and CAPRIN2 during G2/M stage; CAPRIN2 functions as a scaffold for the complex by binding to CCNY via its N terminus and to CDK14 via its C terminus. Interacts with CCNY; CCNY mediates its recruitment to the plasma membrane and promotes phosphorylation of LRP6. Interacts with CCDN3 and CDKN1A. Interacts with SEPT8. Interacts with 14-3-3 proteina YWHAB, YWHAE, YWHAH and YWHAQ. Highly expressed in brain, pancreas, kidney, heart, testis and ovary. Also detected at lower levels in other tissues except in spleen and thymus where expression is barely detected.

The protein localises to the cell membrane. It is found in the cytoplasm. The protein resides in the nucleus. It carries out the reaction L-seryl-[protein] + ATP = O-phospho-L-seryl-[protein] + ADP + H(+). It catalyses the reaction L-threonyl-[protein] + ATP = O-phospho-L-threonyl-[protein] + ADP + H(+). Its activity is regulated as follows. Serine/threonine-protein kinase activity is promoted by associated cyclins CCDN3 and CCNY and repressed by CDKN1A. Serine/threonine-protein kinase involved in the control of the eukaryotic cell cycle, whose activity is controlled by an associated cyclin. Acts as a cell-cycle regulator of Wnt signaling pathway during G2/M phase by mediating the phosphorylation of LRP6 at 'Ser-1490', leading to the activation of the Wnt signaling pathway. Acts as a regulator of cell cycle progression and cell proliferation via its interaction with CCDN3. Phosphorylates RB1 in vitro, however the relevance of such result remains to be confirmed in vivo. May also play a role in meiosis, neuron differentiation and may indirectly act as a negative regulator of insulin-responsive glucose transport. In Homo sapiens (Human), this protein is Cyclin-dependent kinase 14 (CDK14).